The chain runs to 2026 residues: E3 ubiquitin-protein ligase TRIP12 (2026 aa).

Composition is skewed to polar residues over residues 1 to 10, 32 to 42, and 73 to 84; these read MSNRPNSNPG, GRNSLSLSVGS, and SSVSEPNITFSP. Positions 1 to 437 are disordered; that stretch reads MSNRPNSNPG…SGESESDDSE (437 aa). Composition is skewed to low complexity over residues 94-112, 135-161, 171-188, and 199-241; these read SSHF…AISP, AEPA…STPS, LLSS…SAAG, and AAKP…SSAA. A compositionally biased stretch (polar residues) spans 359–371; it reads QKTTGSCASTSRR. The span at 379–391 shows a compositional bias: basic and acidic residues; it reads GAAEARRQEKMAD. Positions 392–404 are enriched in polar residues; the sequence is SDNNQDGANSSAA. Residues 412 to 430 are compositionally biased toward low complexity; it reads GASASSSVAGAVGMTTSGE. Residues 789 to 876 form the WWE domain; that stretch reads MLKKGSAQTT…DPELAKCFIK (88 aa). 2 disordered regions span residues 1008–1123 and 1441–1470; these read SNVT…SVSN and GCKD…KQDE. Residues 1040 to 1053 are compositionally biased toward basic residues; the sequence is KRKRLPKRGPRRPK. Residues 1056 to 1065 show a composition bias toward basic and acidic residues; the sequence is PPRDDDKVDN. Residues 1068-1079 are compositionally biased toward low complexity; sequence KSPTTTQSPKSS. Positions 1094-1104 are enriched in polar residues; it reads TQANSANSEPS. The tract at residues 1530–1604 is K-box; it reads EIIPTGEFIN…AMQRLLDTNP (75 aa). The HECT domain maps to 1919–2026; it reads PDHGYTHDSR…REGQQSFHLS (108 aa). The active-site Glycyl thioester intermediate is Cys-1993.

This sequence belongs to the UPL family. K-HECT subfamily.

The protein resides in the nucleus. Its subcellular location is the nucleoplasm. The catalysed reaction is S-ubiquitinyl-[E2 ubiquitin-conjugating enzyme]-L-cysteine + [acceptor protein]-L-lysine = [E2 ubiquitin-conjugating enzyme]-L-cysteine + N(6)-ubiquitinyl-[acceptor protein]-L-lysine.. Its pathway is protein modification; protein ubiquitination. E3 ubiquitin-protein ligase involved in ubiquitin fusion degradation (UFD) pathway and regulation of DNA repair. Part of the ubiquitin fusion degradation (UFD) pathway, a process that mediates ubiquitination of protein at their N-terminus, regardless of the presence of lysine residues in target proteins. Acts as a key regulator of DNA damage response by acting as a suppressor of RNF168, an E3 ubiquitin-protein ligase that promotes accumulation of 'Lys-63'-linked histone H2A and H2AX at DNA damage sites, thereby acting as a guard against excessive spreading of ubiquitinated chromatin at damaged chromosomes. This is E3 ubiquitin-protein ligase TRIP12 (trip12) from Danio rerio (Zebrafish).